The chain runs to 247 residues: Uridylate kinase (247 aa).

ATP is bound at residue 15-18; it reads KLSG. An involved in allosteric activation by GTP region spans residues 23–28; it reads GEEGFG. Gly57 contacts UMP. Residues Gly58 and Arg62 each contribute to the ATP site. Residues Asp77 and 138–145 contribute to the UMP site; that span reads TGNPFCTT. ATP is bound by residues Thr165, Tyr171, and Asp174.

Belongs to the UMP kinase family. Homohexamer.

The protein resides in the cytoplasm. The catalysed reaction is UMP + ATP = UDP + ADP. It functions in the pathway pyrimidine metabolism; CTP biosynthesis via de novo pathway; UDP from UMP (UMPK route): step 1/1. With respect to regulation, allosterically activated by GTP. Inhibited by UTP. Its function is as follows. Catalyzes the reversible phosphorylation of UMP to UDP. The polypeptide is Uridylate kinase (Shewanella loihica (strain ATCC BAA-1088 / PV-4)).